A 384-amino-acid chain; its full sequence is MHFHFCSKHSIKSAEKSDILKQQLIIIISNRKEVRQLSQHKNIRTASEEIQWTSRTYGAVIVLIAGLCLLCLGAFLSISLGAADIHLRTVWEAIFHYQPTKTSHQIIHDLRLPRTAAAALVGALLAVSGAIMQGMTRNPLAEPSIMGVTSGSAFAVSIAFAFFPGLSAMGLVLWSFAGAGLGASTVMGIGMFSRGGLTPVKLALAGTAVTYFFTGISTAIAIRFDVAQDISFWYAGGVAGVKWSGVQLLLIAGAVGLTLAFFIARSVTVLSLGDDLAKGLGQYTSAVKLVGMLIVVILTGAAVSIAGTIAFIGLIIPHITRFLVGVDYRWIIPCSAVLGAVLLVFADIAARLVNAPFETPVGALTSLIGVPFFFYLARRERRGL.

9 consecutive transmembrane segments (helical) span residues 58 to 78 (GAVI…FLSI), 115 to 135 (TAAA…MQGM), 154 to 174 (FAVS…LVLW), 176 to 196 (FAGA…SRGG), 202 to 222 (LALA…AIAI), 243 to 263 (WSGV…AFFI), 296 to 316 (VILT…GLII), 330 to 350 (WIIP…DIAA), and 357 to 377 (FETP…FYLA).

Belongs to the binding-protein-dependent transport system permease family. FecCD subfamily. In terms of assembly, the complex is composed of an ATP-binding protein (FhuC), two transmembrane proteins (FhuB and FhuG) and a solute-binding protein (FhuD or YxeB).

It localises to the cell membrane. It is found in the membrane raft. In terms of biological role, part of the ABC transporter complex FhuBGCD involved in iron(3+)-hydroxamate import. Responsible for the translocation of the substrate across the membrane. This chain is Iron(3+)-hydroxamate import system permease protein FhuB (fhuB), found in Bacillus subtilis (strain 168).